We begin with the raw amino-acid sequence, 365 residues long: Putative clathrin assembly protein At4g40080 (365 aa).

Residues 29–167 enclose the ENTH domain; it reads NTKSKTLSFH…STSRIMGFFI (139 aa).

The protein localises to the membrane. It localises to the clathrin-coated pit. It is found in the golgi apparatus. The protein resides in the cytoplasmic vesicle. Its subcellular location is the clathrin-coated vesicle. The sequence is that of Putative clathrin assembly protein At4g40080 from Arabidopsis thaliana (Mouse-ear cress).